The sequence spans 263 residues: Calpain small subunit 1 (263 aa).

Position 1 is an N-acetylmethionine (methionine 1). A Phosphoserine modification is found at serine 6. Residues 91 to 125 (EEVRQFRRLFAQLAGDDMEVSATELMNILNKVVTR) enclose the EF-hand 1; atypical domain. Positions 104, 107, 109, 114, 132, 147, 149, 151, 153, and 158 each coordinate Ca(2+). 4 EF-hand domains span residues 134-167 (FGIDTCRSMVAVMDSDTTGKLGFEEFKYLWNNIK), 164-199 (NNIKKWQAVYKQFDVDRSGTIGSSELPGAFEAAGFR), 200-228 (LNEHLYNMIIRRYSDEGGNMDFDNFISCL), and 229-263 (VRLDAMFRAFKSLDKDGTGQIQVNIQEWLQLTMYS). N6-acetyllysine is present on lysine 174. Aspartate 177, aspartate 179, serine 181, threonine 183, glutamate 188, and aspartate 220 together coordinate Ca(2+).

In terms of assembly, homodimer or heterodimer of a large (catalytic) and a small (regulatory) subunit. In presence of calcium, the heterodimer dissociates.

The protein localises to the cytoplasm. The protein resides in the cell membrane. Functionally, regulatory subunit of the calcium-regulated non-lysosomal thiol-protease which catalyzes limited proteolysis of substrates involved in cytoskeletal remodeling and signal transduction. Essential for embryonic development. This is Calpain small subunit 1 (CAPNS1) from Bos taurus (Bovine).